The sequence spans 141 residues: ATP synthase epsilon chain (141 aa).

This sequence belongs to the ATPase epsilon chain family. In terms of assembly, F-type ATPases have 2 components, CF(1) - the catalytic core - and CF(0) - the membrane proton channel. CF(1) has five subunits: alpha(3), beta(3), gamma(1), delta(1), epsilon(1). CF(0) has three main subunits: a, b and c.

The protein localises to the cell membrane. Produces ATP from ADP in the presence of a proton gradient across the membrane. The protein is ATP synthase epsilon chain of Lactococcus lactis subsp. lactis (strain IL1403) (Streptococcus lactis).